We begin with the raw amino-acid sequence, 230 residues long: Demethylmenaquinone methyltransferase (230 aa).

Residues Thr-62, Asp-80, Asp-100–Gly-101, and Ser-117 each bind S-adenosyl-L-methionine.

It belongs to the class I-like SAM-binding methyltransferase superfamily. MenG/UbiE family.

The enzyme catalyses a 2-demethylmenaquinol + S-adenosyl-L-methionine = a menaquinol + S-adenosyl-L-homocysteine + H(+). It participates in quinol/quinone metabolism; menaquinone biosynthesis; menaquinol from 1,4-dihydroxy-2-naphthoate: step 2/2. Functionally, methyltransferase required for the conversion of demethylmenaquinol (DMKH2) to menaquinol (MKH2). The chain is Demethylmenaquinone methyltransferase from Corynebacterium urealyticum (strain ATCC 43042 / DSM 7109).